The following is a 94-amino-acid chain: Small ribosomal subunit protein uS19 (94 aa).

This sequence belongs to the universal ribosomal protein uS19 family.

In terms of biological role, protein S19 forms a complex with S13 that binds strongly to the 16S ribosomal RNA. The sequence is that of Small ribosomal subunit protein uS19 from Clostridium novyi (strain NT).